Consider the following 662-residue polypeptide: uncharacterized protein (662 aa).

A run of 16 helical transmembrane segments spans residues 10–30 (SSIVSSALVSSAIGYAIGWPV), 46–66 (PVIGLGIFGAVAVSIFHFLPI), 68–88 (AINLMLIVLGLSAVAFWLSKG), 101–121 (GFCWFTVAFLLCLLPAFEIIP), 167–187 (LIYYYVWHFIAACSSVITGAT), 193–213 (IALTGMTALFSTFVVTWLAVA), 217–237 (SAYAAWWSLPLLFVGSLKPAV), 263–283 (PWVPQHVFSGTLALIAIMAYL), 285–305 (ILYSNAGRNMALAVFMGAILA), 312–332 (MWAGSLSLLLILPLVGALSVS), 342–362 (EVLISLSVTVVITLLCAAVLI), 373–393 (KVVEFWVFPIFAGDYWFLDIP), 394–414 (GFWLVLVFLEFGIIYLSFLIW), 432–452 (ALTVSVLAPLFCTQILHSVIM), 460–480 (VLIPSMLVMTALTSGLFSTTI), and 485–505 (LVGRLTTITAIILLAPSILVG).

The protein localises to the cell membrane. This is an uncharacterized protein from Sinorhizobium fredii (strain NBRC 101917 / NGR234).